Consider the following 428-residue polypeptide: U2 small nuclear ribonucleoprotein auxiliary factor 35 kDa subunit-related protein 2-like (428 aa).

The disordered stretch occupies residues 1–51; the sequence is MASRQTAIPEKLSRKQYKAAMKKEKRKKRRQKMARLRALEAPPEEDDDVSA. A compositionally biased stretch (basic residues) spans 23–35; it reads KEKRKKRRQKMAR. A compositionally biased stretch (acidic residues) spans 42–51; sequence PPEEDDDVSA. Ser50 is subject to Phosphoserine. The C3H1-type 1 zinc-finger motif lies at 157–185; sequence EKYRPSCPFYNKTGACRFGNRCSRKHDFP. An RRM domain is found at 189-295; the sequence is PTLLVKSMFT…RQLQCEFCPV (107 aa). A C3H1-type 2 zinc finger spans residues 297–324; that stretch reads RWKVAICGLFEMQKCPKGKHCNFLHVFR. Positions 339–428 are disordered; it reads MSPPAWTGSS…PGPQSQSHRT (90 aa). Residue Ser340 is modified to Phosphoserine. Residues 351–366 are compositionally biased toward basic and acidic residues; it reads NSDRRERKDHHEEYYS. Low complexity predominate over residues 367–377; it reads KSRSYHSGSYH. At Ser375 the chain carries Phosphoserine. The span at 389 to 410 shows a compositional bias: basic residues; that stretch reads SPHRWKKSHKQTTKSHERHSSR. Residues 419-428 show a composition bias toward polar residues; the sequence is PGPQSQSHRT.

In terms of assembly, interacts with SF3B1. Interacts with ZCRB1. Highest expression levels are detected in the brain, and lower expression levels in other tissues like epididymis, testis, bone marrow or muscle. In testis, expressed in both Sertoli and spermatogenic cell.

The protein resides in the nucleus. Plays a role in splicing of the U12-type introns. Implicated also in removal of U2 introns positioned adjacent to a U12 intron. This Mus musculus (Mouse) protein is U2 small nuclear ribonucleoprotein auxiliary factor 35 kDa subunit-related protein 2-like.